A 548-amino-acid chain; its full sequence is Phenylalanine--tRNA ligase beta subunit (548 aa).

Residues Leu271–Pro346 enclose the B5 domain. Residues Asp324, Asp330, Glu333, and Asp334 each contribute to the Mg(2+) site.

This sequence belongs to the phenylalanyl-tRNA synthetase beta subunit family. Type 2 subfamily. As to quaternary structure, tetramer of two alpha and two beta subunits. Mg(2+) serves as cofactor.

It is found in the cytoplasm. It carries out the reaction tRNA(Phe) + L-phenylalanine + ATP = L-phenylalanyl-tRNA(Phe) + AMP + diphosphate + H(+). The protein is Phenylalanine--tRNA ligase beta subunit of Aeropyrum pernix (strain ATCC 700893 / DSM 11879 / JCM 9820 / NBRC 100138 / K1).